Here is a 361-residue protein sequence, read N- to C-terminus: Phosphoserine aminotransferase (361 aa).

Arg-43 provides a ligand contact to L-glutamate. Residues 77–78, Trp-103, Thr-153, Asp-173, and Gln-196 contribute to the pyridoxal 5'-phosphate site; that span reads AS. Lys-197 bears the N6-(pyridoxal phosphate)lysine mark. 238-239 is a binding site for pyridoxal 5'-phosphate; the sequence is NT.

Belongs to the class-V pyridoxal-phosphate-dependent aminotransferase family. SerC subfamily. As to quaternary structure, homodimer. Requires pyridoxal 5'-phosphate as cofactor.

The protein localises to the cytoplasm. It catalyses the reaction O-phospho-L-serine + 2-oxoglutarate = 3-phosphooxypyruvate + L-glutamate. It carries out the reaction 4-(phosphooxy)-L-threonine + 2-oxoglutarate = (R)-3-hydroxy-2-oxo-4-phosphooxybutanoate + L-glutamate. It participates in amino-acid biosynthesis; L-serine biosynthesis; L-serine from 3-phospho-D-glycerate: step 2/3. It functions in the pathway cofactor biosynthesis; pyridoxine 5'-phosphate biosynthesis; pyridoxine 5'-phosphate from D-erythrose 4-phosphate: step 3/5. Its function is as follows. Catalyzes the reversible conversion of 3-phosphohydroxypyruvate to phosphoserine and of 3-hydroxy-2-oxo-4-phosphonooxybutanoate to phosphohydroxythreonine. This Pseudomonas aeruginosa (strain ATCC 15692 / DSM 22644 / CIP 104116 / JCM 14847 / LMG 12228 / 1C / PRS 101 / PAO1) protein is Phosphoserine aminotransferase.